The chain runs to 303 residues: Probable 5-dehydro-4-deoxyglucarate dehydratase (303 aa).

It belongs to the DapA family.

It catalyses the reaction 5-dehydro-4-deoxy-D-glucarate + H(+) = 2,5-dioxopentanoate + CO2 + H2O. It functions in the pathway carbohydrate acid metabolism; D-glucarate degradation; 2,5-dioxopentanoate from D-glucarate: step 2/2. This chain is Probable 5-dehydro-4-deoxyglucarate dehydratase, found in Delftia acidovorans (strain DSM 14801 / SPH-1).